We begin with the raw amino-acid sequence, 465 residues long: Cysteine--tRNA ligase (465 aa).

Cys-30 is a Zn(2+) binding site. A 'HIGH' region motif is present at residues 32-42; it reads ITVYDYCHVGH. Zn(2+)-binding residues include Cys-214, His-239, and Glu-243. The 'KMSKS' region motif lies at 271–275; the sequence is KMSKS. Lys-274 contacts ATP.

This sequence belongs to the class-I aminoacyl-tRNA synthetase family. Monomer. Requires Zn(2+) as cofactor.

Its subcellular location is the cytoplasm. It carries out the reaction tRNA(Cys) + L-cysteine + ATP = L-cysteinyl-tRNA(Cys) + AMP + diphosphate. This Burkholderia cenocepacia (strain HI2424) protein is Cysteine--tRNA ligase.